The following is a 211-amino-acid chain: Protein-L-isoaspartate O-methyltransferase (211 aa).

The active site involves Ser60.

Belongs to the methyltransferase superfamily. L-isoaspartyl/D-aspartyl protein methyltransferase family.

The protein localises to the cytoplasm. It carries out the reaction [protein]-L-isoaspartate + S-adenosyl-L-methionine = [protein]-L-isoaspartate alpha-methyl ester + S-adenosyl-L-homocysteine. Its function is as follows. Catalyzes the methyl esterification of L-isoaspartyl residues in peptides and proteins that result from spontaneous decomposition of normal L-aspartyl and L-asparaginyl residues. It plays a role in the repair and/or degradation of damaged proteins. The polypeptide is Protein-L-isoaspartate O-methyltransferase (Pseudomonas syringae pv. tomato (strain ATCC BAA-871 / DC3000)).